We begin with the raw amino-acid sequence, 687 residues long: Putative secreted metallopeptidase (687 aa).

An N-terminal signal peptide occupies residues 1 to 22; sequence MLFTSTAVAALSGALLIQPALA. Asparagine 54, asparagine 114, asparagine 252, asparagine 256, and asparagine 379 each carry an N-linked (GlcNAc...) asparagine glycan.

Belongs to the peptidase M10B family.

It is found in the secreted. The polypeptide is Putative secreted metallopeptidase (Arthroderma benhamiae (strain ATCC MYA-4681 / CBS 112371) (Trichophyton mentagrophytes)).